The sequence spans 203 residues: Dephospho-CoA kinase (203 aa).

Residues 5–203 (IVGLTGGIAS…VVYRVAASEH (199 aa)) form the DPCK domain. 13 to 18 (ASGKSA) contributes to the ATP binding site.

The protein belongs to the CoaE family.

It is found in the cytoplasm. It carries out the reaction 3'-dephospho-CoA + ATP = ADP + CoA + H(+). It functions in the pathway cofactor biosynthesis; coenzyme A biosynthesis; CoA from (R)-pantothenate: step 5/5. Catalyzes the phosphorylation of the 3'-hydroxyl group of dephosphocoenzyme A to form coenzyme A. The chain is Dephospho-CoA kinase from Xanthomonas euvesicatoria pv. vesicatoria (strain 85-10) (Xanthomonas campestris pv. vesicatoria).